The chain runs to 272 residues: MTREIVIGGVKIGAKRPLALVAGPCVIESELATMRQAERLMTICNALSLPLIFKASYDKANRTSIGAYRGPGMREGLRILRKVKESLGLAVLSDVHSIEQVAPAAEVLDVLQIPAFLCRQTDLLIAAAATGRVINVKKGQFLAPWDMKNVAAKIASSGNENIILTERGASFGYNNLVVDMRSFPVMRASGYPVIFDATHSVQLPGGQGESSGGQREFVEFLSRAAVAAGVDGIFMEVHEEPEKALCDGPNSIALNDLPALLATLKAIDAVVK.

The protein belongs to the KdsA family.

It is found in the cytoplasm. The enzyme catalyses D-arabinose 5-phosphate + phosphoenolpyruvate + H2O = 3-deoxy-alpha-D-manno-2-octulosonate-8-phosphate + phosphate. The protein operates within carbohydrate biosynthesis; 3-deoxy-D-manno-octulosonate biosynthesis; 3-deoxy-D-manno-octulosonate from D-ribulose 5-phosphate: step 2/3. It functions in the pathway bacterial outer membrane biogenesis; lipopolysaccharide biosynthesis. The chain is 2-dehydro-3-deoxyphosphooctonate aldolase from Pelobacter propionicus (strain DSM 2379 / NBRC 103807 / OttBd1).